The chain runs to 339 residues: Phosphate acyltransferase (339 aa).

This sequence belongs to the PlsX family. In terms of assembly, homodimer. Probably interacts with PlsY.

The protein localises to the cytoplasm. The enzyme catalyses a fatty acyl-[ACP] + phosphate = an acyl phosphate + holo-[ACP]. The protein operates within lipid metabolism; phospholipid metabolism. In terms of biological role, catalyzes the reversible formation of acyl-phosphate (acyl-PO(4)) from acyl-[acyl-carrier-protein] (acyl-ACP). This enzyme utilizes acyl-ACP as fatty acyl donor, but not acyl-CoA. The sequence is that of Phosphate acyltransferase from Moorella thermoacetica (strain ATCC 39073 / JCM 9320).